We begin with the raw amino-acid sequence, 307 residues long: Ribosomal RNA small subunit methyltransferase H (307 aa).

S-adenosyl-L-methionine is bound by residues 33–35 (GGY), Asp51, Phe82, Asp96, and Gln103.

Belongs to the methyltransferase superfamily. RsmH family.

The protein localises to the cytoplasm. It catalyses the reaction cytidine(1402) in 16S rRNA + S-adenosyl-L-methionine = N(4)-methylcytidine(1402) in 16S rRNA + S-adenosyl-L-homocysteine + H(+). Its function is as follows. Specifically methylates the N4 position of cytidine in position 1402 (C1402) of 16S rRNA. The sequence is that of Ribosomal RNA small subunit methyltransferase H from Rickettsia rickettsii (strain Iowa).